The chain runs to 114 residues: Small ribosomal subunit protein bS6 (114 aa).

It belongs to the bacterial ribosomal protein bS6 family.

Its function is as follows. Binds together with bS18 to 16S ribosomal RNA. In Hydrogenovibrio crunogenus (strain DSM 25203 / XCL-2) (Thiomicrospira crunogena), this protein is Small ribosomal subunit protein bS6.